The following is a 1161-amino-acid chain: Lysine-specific demethylase 2A (1161 aa).

The residue at position 28 (serine 28) is a Phosphoserine. One can recognise a JmjC domain in the interval 148-316; sequence FSHTRLENMV…MQLKIYSIED (169 aa). Substrate is bound at residue threonine 209. Fe cation contacts are provided by histidine 212 and aspartate 214. Position 229 (lysine 229) interacts with substrate. A Fe cation-binding site is contributed by histidine 284. Phosphoserine is present on residues serine 390 and serine 394. Positions 419 to 433 are enriched in low complexity; the sequence is KTLSGDSSSDSTRGS. The segment at 419–445 is disordered; sequence KTLSGDSSSDSTRGSHNGQVWDPQCSP. Position 444 is a phosphoserine (serine 444). Lysine 505 participates in a covalent cross-link: Glycyl lysine isopeptide (Lys-Gly) (interchain with G-Cter in SUMO2). Residues 532 to 557 form a disordered region; it reads VPTIPITKPHTMKPAPRLTPVRPAAA. Threonine 550 bears the Phosphothreonine mark. Serine 558 is subject to Phosphoserine. The CXXC-type zinc-finger motif lies at 564–610; it reads ARRRRVRCRKCKACVQGECGVCHYCRDMKKFGGPGRMKQSCVLRQCL. Zn(2+) is bound by residues cysteine 571, cysteine 574, cysteine 577, cysteine 582, cysteine 585, cysteine 588, cysteine 604, cysteine 609, cysteine 620, and cysteine 623. The PHD-type zinc-finger motif lies at 617 to 678; that stretch reads SVTCSLCGEV…CWECPKCYQE (62 aa). The residue at position 632 (threonine 632) is a Phosphothreonine. Residues cysteine 642, cysteine 645, histidine 650, cysteine 653, cysteine 672, and cysteine 675 each contribute to the Zn(2+) site. Serine 692 bears the Phosphoserine mark. The interval 705 to 789 is disordered; the sequence is LRSCEEPLTP…PSGKKELSEV (85 aa). Position 713 is a phosphothreonine (threonine 713). Phosphoserine is present on residues serine 718 and serine 731. Basic and acidic residues-rich tracts occupy residues 746–757 and 771–789; these read SDHHSASRDERF and TMVR…LSEV. Serine 825, serine 868, and serine 882 each carry phosphoserine. The segment at 840 to 886 is disordered; sequence CPARNPQHGDEEGLGGEEEEEEEEEEDDSAEEGGAARLNGRGSWAQD. Residues 851–870 are compositionally biased toward acidic residues; the sequence is EGLGGEEEEEEEEEEDDSAE. The F-box domain maps to 888-935; sequence DESWMQREVWMSVFRYLSRKELCECMRVCKTWYKWCCDKRLWTKIDLS. LRR repeat units follow at residues 960–981 and 983–1009; these read WTNI…LKDL and LAGC…DLRW. An ADP-ribosylarginine modification is found at arginine 1019. 4 LRR repeats span residues 1047-1072, 1073-1102, 1103-1127, and 1128-1155; these read GLDI…DLSH, CSHL…NMAG, CNKL…DLRG, and CKQI…SDEK.

The protein belongs to the JHDM1 histone demethylase family. As to quaternary structure, part of a SCF (SKP1-cullin-F-box) protein ligase complex. Interacts with CBX5/HP1A; the interaction promotes CBX5 localization to chromatin. The SKP1-KDM2A complex interacts with UBB. Fe(2+) serves as cofactor. Mono-ADP-ribosylated at Arg-1019 in response to DNA damage, leading to displacement from chromatin, resulting in increased dimethylation of histone H3 at 'Lys-36'.

The protein localises to the nucleus. The protein resides in the nucleoplasm. It is found in the chromosome. The enzyme catalyses N(6),N(6)-dimethyl-L-lysyl(36)-[histone H3] + 2 2-oxoglutarate + 2 O2 = L-lysyl(36)-[histone H3] + 2 formaldehyde + 2 succinate + 2 CO2. Functionally, histone demethylase that specifically demethylates 'Lys-36' of histone H3, thereby playing a central role in histone code. Preferentially demethylates dimethylated H3 'Lys-36' residue while it has weak or no activity for mono- and tri-methylated H3 'Lys-36'. May also recognize and bind to some phosphorylated proteins and promote their ubiquitination and degradation. Required to maintain the heterochromatic state. Associates with centromeres and represses transcription of small non-coding RNAs that are encoded by the clusters of satellite repeats at the centromere. Required to sustain centromeric integrity and genomic stability, particularly during mitosis. Regulates circadian gene expression by repressing the transcriptional activator activity of CLOCK-BMAL1 heterodimer and RORA in a catalytically-independent manner. The polypeptide is Lysine-specific demethylase 2A (Kdm2a) (Mus musculus (Mouse)).